The sequence spans 114 residues: Transmembrane protein 14DP (114 aa).

Helical transmembrane passes span 8–28, 36–56, 63–80, and 83–103; these read LVPL…GGIV, APSL…AYQL, VWDF…IMGM, and YYYG…LMAA.

This sequence belongs to the TMEM14 family.

The protein localises to the membrane. The protein is Transmembrane protein 14DP (TMEM14DP) of Homo sapiens (Human).